A 121-amino-acid polypeptide reads, in one-letter code: Small ribosomal subunit protein uS12 (121 aa).

Residues 1-25 (MPTINQLVRKNRKQKKSQSKSPVLE) are disordered. Positions 9–18 (RKNRKQKKSQ) are enriched in basic residues. Residue aspartate 89 is modified to 3-methylthioaspartic acid.

It belongs to the universal ribosomal protein uS12 family. Part of the 30S ribosomal subunit. Contacts proteins S8 and S17. May interact with IF1 in the 30S initiation complex.

Its function is as follows. With S4 and S5 plays an important role in translational accuracy. Interacts with and stabilizes bases of the 16S rRNA that are involved in tRNA selection in the A site and with the mRNA backbone. Located at the interface of the 30S and 50S subunits, it traverses the body of the 30S subunit contacting proteins on the other side and probably holding the rRNA structure together. The combined cluster of proteins S8, S12 and S17 appears to hold together the shoulder and platform of the 30S subunit. This is Small ribosomal subunit protein uS12 from Rhodopirellula baltica (strain DSM 10527 / NCIMB 13988 / SH1).